An 898-amino-acid polypeptide reads, in one-letter code: MPSALTASEIREAFLKFFEERGHRRVASSSLVPANDPTLMFTNAGMVQFKDVFTGRETRDYRRATTSQKCVRAGGKHNDLDNVGFTARHHTFFEMLGNFSFGDYFKADAIAYGWEFVTRTLGLSTDRLAVTVFNGEGGTPWDEEAYELWKKQGVPAERLYKLGLKDNFWAMGDTGPCGPCSEIHYHQGDDIPCVEEAEGKKCQGVACDCDRWLEIWNLVFMQFERKEKDGPLIPLPKPSIDTGAGLERIASVVQGKRSNYETDLFQNILATVSELCGKPYSQESGASQRVVADHSRAAAFLISDGVQPSNEGRGYVLRRIMRRAIRHGTQQLGLEDVFFFKVVDRVIELMGDAYPELRESRTFVLEVCRHEETSFRQTLSRGLKLIEEELSELQKAGGKQLSGDVVFLLHGTYGFPWDLTQIIARERGLDVDLVRFEERLKEEADKNKFAGSGDKATGEVYLKLAERLGTTEFLGYEGEGHEGEGSIRAIVKDGAEVTQATQGDTVELVLDRTPFYGESGGQMGDTGRIVGHGGKAVAKVTDAQRPVPGLVVHSVEVSEGTFKVGDMVQAGVDSERRKSIRANHSATHLLHKALKLVLGEHVKQAGSVVAPDYLRFDFAHFSPATSAQLEQVEDLVNGWIRDNAGAETRVMSLEDAKKSGAVAMFGEKYGETVRVVTVHPESTELCGGTHVRRSGDIGLFKIASESGVASGVRRIVALTGIGALQHVREQEHELRKVAELLKSNPKEVSKRVEATQKRVKELERKVEEVAVKAQTASSKDLLEQARDVNGMKVLATQVDAADDNVLRGMADQLRDRIRSGVVAIGGEKDGRAIILVAATKDVVAKGINAGALVREMAKEVGGKGGGKAEMAQAGGPDASKLPAALEKLYELVKGVGTA.

Zn(2+)-binding residues include His-584, His-588, Cys-686, and His-690.

Belongs to the class-II aminoacyl-tRNA synthetase family. Requires Zn(2+) as cofactor.

It localises to the cytoplasm. It carries out the reaction tRNA(Ala) + L-alanine + ATP = L-alanyl-tRNA(Ala) + AMP + diphosphate. In terms of biological role, catalyzes the attachment of alanine to tRNA(Ala) in a two-step reaction: alanine is first activated by ATP to form Ala-AMP and then transferred to the acceptor end of tRNA(Ala). Also edits incorrectly charged Ser-tRNA(Ala) and Gly-tRNA(Ala) via its editing domain. In Myxococcus xanthus (strain DK1622), this protein is Alanine--tRNA ligase.